A 152-amino-acid polypeptide reads, in one-letter code: Stigma-specific STIG1-like protein 1 (152 aa).

The N-terminal stretch at 1–19 (MAFVKLLVSIAITTAITIA) is a signal peptide.

Belongs to the STIG1 family.

In Arabidopsis thaliana (Mouse-ear cress), this protein is Stigma-specific STIG1-like protein 1.